Consider the following 406-residue polypeptide: Peptidase T (406 aa).

H81 contacts Zn(2+). Residue D83 is part of the active site. D142 contacts Zn(2+). Catalysis depends on E176, which acts as the Proton acceptor. Zn(2+)-binding residues include E177, D199, and H381.

This sequence belongs to the peptidase M20B family. It depends on Zn(2+) as a cofactor.

It localises to the cytoplasm. It catalyses the reaction Release of the N-terminal residue from a tripeptide.. Cleaves the N-terminal amino acid of tripeptides. This Streptococcus pneumoniae serotype 2 (strain D39 / NCTC 7466) protein is Peptidase T.